The primary structure comprises 562 residues: Oligo-1,6-glucosidase (562 aa).

4 residues coordinate Ca(2+): aspartate 21, asparagine 23, aspartate 25, and aspartate 29. Residue aspartate 199 is the Nucleophile of the active site. The active-site Proton donor is the glutamate 256.

The protein belongs to the glycosyl hydrolase 13 family.

The protein resides in the cytoplasm. The enzyme catalyses Hydrolysis of (1-&gt;6)-alpha-D-glucosidic linkages in some oligosaccharides produced from starch and glycogen by alpha-amylase, and in isomaltose.. In Parageobacillus thermoglucosidasius (Geobacillus thermoglucosidasius), this protein is Oligo-1,6-glucosidase (malL).